Consider the following 246-residue polypeptide: DNA repair protein RecO (246 aa).

Belongs to the RecO family.

Involved in DNA repair and RecF pathway recombination. In Maridesulfovibrio salexigens (strain ATCC 14822 / DSM 2638 / NCIMB 8403 / VKM B-1763) (Desulfovibrio salexigens), this protein is DNA repair protein RecO.